We begin with the raw amino-acid sequence, 119 residues long: Small ribosomal subunit protein uS13 (119 aa).

The tract at residues 96-119 (PVRGQRTKTNARTRKGPRKLIKSR) is disordered.

It belongs to the universal ribosomal protein uS13 family. As to quaternary structure, part of the 30S ribosomal subunit. Forms a loose heterodimer with protein S19. Forms two bridges to the 50S subunit in the 70S ribosome.

In terms of biological role, located at the top of the head of the 30S subunit, it contacts several helices of the 16S rRNA. In the 70S ribosome it contacts the 23S rRNA (bridge B1a) and protein L5 of the 50S subunit (bridge B1b), connecting the 2 subunits; these bridges are implicated in subunit movement. Contacts the tRNAs in the A and P-sites. This is Small ribosomal subunit protein uS13 from Buchnera aphidicola subsp. Cinara cedri (strain Cc).